A 138-amino-acid chain; its full sequence is ATP synthase epsilon chain (138 aa).

It belongs to the ATPase epsilon chain family. As to quaternary structure, F-type ATPases have 2 components, CF(1) - the catalytic core - and CF(0) - the membrane proton channel. CF(1) has five subunits: alpha(3), beta(3), gamma(1), delta(1), epsilon(1). CF(0) has three main subunits: a, b and c.

The protein localises to the cellular thylakoid membrane. Functionally, produces ATP from ADP in the presence of a proton gradient across the membrane. The polypeptide is ATP synthase epsilon chain (Microcystis aeruginosa (strain NIES-843 / IAM M-2473)).